Reading from the N-terminus, the 236-residue chain is Uridylate kinase (236 aa).

10-11 (GS) serves as a coordination point for ATP. Gly44 serves as a coordination point for UMP. ATP-binding residues include Gly45 and Arg49. Residues Asp66 and 114-120 (ITPGQTT) each bind UMP. 3 residues coordinate ATP: Thr140, Tyr146, and Asp149.

The protein belongs to the UMP kinase family. As to quaternary structure, homohexamer.

The protein localises to the cytoplasm. The catalysed reaction is UMP + ATP = UDP + ADP. The protein operates within pyrimidine metabolism; CTP biosynthesis via de novo pathway; UDP from UMP (UMPK route): step 1/1. Its activity is regulated as follows. Inhibited by UTP. Its function is as follows. Catalyzes the reversible phosphorylation of UMP to UDP. This chain is Uridylate kinase, found in Methanospirillum hungatei JF-1 (strain ATCC 27890 / DSM 864 / NBRC 100397 / JF-1).